The primary structure comprises 203 residues: Adenylyl-sulfate kinase (203 aa).

Residue 35 to 42 coordinates ATP; sequence GLSGSGKS. The active-site Phosphoserine intermediate is Ser109.

The protein belongs to the APS kinase family.

The enzyme catalyses adenosine 5'-phosphosulfate + ATP = 3'-phosphoadenylyl sulfate + ADP + H(+). Its pathway is sulfur metabolism; hydrogen sulfide biosynthesis; sulfite from sulfate: step 2/3. Catalyzes the synthesis of activated sulfate. This Geotalea daltonii (strain DSM 22248 / JCM 15807 / FRC-32) (Geobacter daltonii) protein is Adenylyl-sulfate kinase.